A 104-amino-acid polypeptide reads, in one-letter code: Small ribosomal subunit protein uS10 (104 aa).

The protein belongs to the universal ribosomal protein uS10 family. As to quaternary structure, part of the 30S ribosomal subunit.

Involved in the binding of tRNA to the ribosomes. The protein is Small ribosomal subunit protein uS10 of Alkaliphilus oremlandii (strain OhILAs) (Clostridium oremlandii (strain OhILAs)).